The following is a 151-amino-acid chain: UPF0208 membrane protein plu3094 (151 aa).

Transmembrane regions (helical) follow at residues phenylalanine 46 to leucine 65 and leucine 69 to glycine 91.

The protein belongs to the UPF0208 family.

Its subcellular location is the cell inner membrane. The sequence is that of UPF0208 membrane protein plu3094 from Photorhabdus laumondii subsp. laumondii (strain DSM 15139 / CIP 105565 / TT01) (Photorhabdus luminescens subsp. laumondii).